The chain runs to 199 residues: FMN-dependent NADH:quinone oxidoreductase 4 (199 aa).

FMN is bound by residues S10, 95-98 (MYNL), and 139-142 (SRGG).

Belongs to the azoreductase type 1 family. As to quaternary structure, homodimer. The cofactor is FMN.

It catalyses the reaction 2 a quinone + NADH + H(+) = 2 a 1,4-benzosemiquinone + NAD(+). The enzyme catalyses N,N-dimethyl-1,4-phenylenediamine + anthranilate + 2 NAD(+) = 2-(4-dimethylaminophenyl)diazenylbenzoate + 2 NADH + 2 H(+). In terms of biological role, quinone reductase that provides resistance to thiol-specific stress caused by electrophilic quinones. Its function is as follows. Also exhibits azoreductase activity. Catalyzes the reductive cleavage of the azo bond in aromatic azo compounds to the corresponding amines. The polypeptide is FMN-dependent NADH:quinone oxidoreductase 4 (Burkholderia lata (strain ATCC 17760 / DSM 23089 / LMG 22485 / NCIMB 9086 / R18194 / 383)).